Reading from the N-terminus, the 515-residue chain is MSLGFVLAVTFSIFLGILTYYLWIWTYWMRKGVKGPRGRPFVGVLDVLLEHETPGLIKLGEWTKKYGKVYGYTDGTQRTLVVADPAMVHEIFVKQFDNFYGRKLNPIQGNPEKEQRVHLLAAQGYRWKRLRTISSQSFSNASLKKMKRTVEDSALELLRHIEKQTAGGEQIDMLRFYQEYTMDVIGRFAMGQTDSMMFKNPIVNVVREIFCGSRKNLMLICQVFPPIGQFIRDLTFKFPRIPAFKLYSIMQDVVAARIAQREREKGAESGEPQDFIDLFLDARSDDVDFSAEAREDFSKRNLKITKELSADEVVGQCFLFLIGGFDTTALSLSYVTYLLAVNPKIQEKVIEEIAREFGTSEVEFEKLGRLKYMDCVIKEALRLYPLASISNSRKCMKTTTVNGVKIEAGVYVQMDTWSLHYDPELWGEDVKEFKPERWSTDEPLEHKGAYLPFGLGPRQCIGMRLAIMEQKILLTHLLKNYTFETGNKTRIPLKLVGSATTSPEDVFVHLRPRIW.

C460 contributes to the heme binding site.

It belongs to the cytochrome P450 family. Requires heme as cofactor.

Functionally, cytochromes P450 are a group of heme-thiolate monooxygenases. They oxidize a variety of structurally unrelated compounds, including steroids, fatty acids, and xenobiotics. The chain is Putative cytochrome P450 CYP13A2 (cyp-13A2) from Caenorhabditis elegans.